A 684-amino-acid polypeptide reads, in one-letter code: RNA helicase NPH-II (684 aa).

A Helicase ATP-binding domain is found at 184–359 (FRAWAARRPT…EFFPDAEFVH (176 aa)). 197–204 (GGTGVGKT) provides a ligand contact to ATP. Positions 308 to 311 (DEVH) match the DEXH box motif. Residues 392 to 563 (NVSAALSAHR…DLYVQPSDLE (172 aa)) enclose the Helicase C-terminal domain.

This sequence belongs to the DEAD box helicase family. DEAH subfamily. As to quaternary structure, monomer.

It is found in the virion. It catalyses the reaction ATP + H2O = ADP + phosphate + H(+). Functionally, NTP-dependent helicase that catalyzes unidirectional unwinding of 3'tailed duplex RNAs and plays an important role during transcription of early mRNAs, presumably by preventing R-loop formation behind the elongating RNA polymerase. Might also play a role in the export of newly synthesized mRNA chains out of the core into the cytoplasm. Required for replication and propagation of viral particles. The sequence is that of RNA helicase NPH-II (NPH2) from Homo sapiens (Human).